The sequence spans 507 residues: Variant surface glycoprotein ILTAT 1.25 (507 aa).

The signal sequence occupies residues 1–21 (MQSQQQPVFISIILLAINTDA). Basic and acidic residues predominate over residues 83 to 95 (EPEAAPKESRSDE). Residues 83–102 (EPEAAPKESRSDETPEACKA) form a disordered region. N-linked (GlcNAc...) asparagine glycosylation is found at asparagine 141 and asparagine 371. The span at 384–395 (PTKQPPAKAAAA) shows a compositional bias: low complexity. The segment at 384 to 474 (PTKQPPAKAA…KKEEECKSPN (91 aa)) is disordered. Residues 396-420 (PEKKSNPQKDCNKNTKKRDCKEGDG) are compositionally biased toward basic and acidic residues. The segment covering 444-455 (SAAGAGDAGASD) has biased composition (low complexity). The segment covering 456–474 (TEAKKCSDKKKEEECKSPN) has biased composition (basic and acidic residues). Aspartate 484 is lipidated: GPI-anchor amidated aspartate. The propeptide at 485 to 507 (SSILANKQFALSVASAAFVALLF) is removed in mature form.

The protein resides in the cell membrane. Functionally, VSG forms a coat on the surface of the parasite. The trypanosome evades the immune response of the host by expressing a series of antigenically distinct VSGs from an estimated 1000 VSG genes. This is Variant surface glycoprotein ILTAT 1.25 from Trypanosoma brucei brucei.